The primary structure comprises 261 residues: Putative outer membrane protein CT_371 (261 aa).

An N-terminal signal peptide occupies residues 1 to 18 (MRLCFILFLLLSPLISEA).

Its subcellular location is the cell outer membrane. The protein is Putative outer membrane protein CT_371 of Chlamydia trachomatis serovar D (strain ATCC VR-885 / DSM 19411 / UW-3/Cx).